The chain runs to 547 residues: Riboflavin transporter RibJ (547 aa).

Residues 1-11 (MLPSFTRKPAD) lie on the Cytoplasmic side of the membrane. Residues 12 to 32 (HPIGYLVALSGLLMQLMSYGI) form a helical membrane-spanning segment. The Extracellular portion of the chain corresponds to 33–58 (DNSYSIFSEDMHNDPSLGFPSITAIS). The helical transmembrane segment at 59 to 79 (LGNSVSLGLSPAFGVLAGFCV) threads the bilayer. Residues 80-85 (DRLPPR) lie on the Cytoplasmic side of the membrane. The chain crosses the membrane as a helical span at residues 86-106 (FMMALSTILLFTGLWISSTLA). Residues 107–108 (AN) lie on the Extracellular side of the membrane. The helical transmembrane segment at 109-129 (IYVVTFTYCLFASIGTACMLS) threads the bilayer. The Cytoplasmic portion of the chain corresponds to 130 to 144 (PGAAATSSWFNRYQG). The helical transmembrane segment at 145 to 165 (LAMGINFAGGGIGSAIIPPLA) threads the bilayer. Topologically, residues 166 to 175 (GKWVVAYGWR) are extracellular. Residues 176 to 196 (KAFQLMSIFCAIGVLATALSA) form a helical membrane-spanning segment. Topologically, residues 197 to 344 (RRREPKRDDS…MFTLPFMGNF (148 aa)) are cytoplasmic. Positions 198-293 (RREPKRDDSS…EGLDVTEQSQ (96 aa)) are disordered. The segment covering 244–255 (NEGKEDVREMGR) has biased composition (basic and acidic residues). A helical membrane pass occupies residues 345 to 365 (LCWFIYSWAFYSLIYAAVPYI). Residues 366-386 (SSMGKPGTVYAGVPPIPTDVA) lie on the Extracellular side of the membrane. A helical membrane pass occupies residues 387-407 (ATLFTFYGVFQVVGSVLVGWL). Residues 408-412 (ASLVT) lie on the Cytoplasmic side of the membrane. Residues 413–433 (AEFAYVFCATVGGIGCGLLAL) form a helical membrane-spanning segment. The Extracellular portion of the chain corresponds to 434-437 (GRSY). A helical membrane pass occupies residues 438–458 (VAFALLLCIIGFCMAGMFAVM). Over 459–470 (PTLIATHLYGPN) the chain is Cytoplasmic. Residues 471–491 (LGFYFGAVFLAGVVGGFVAPP) traverse the membrane as a helical segment. Over 492 to 505 (MQATIQLRNNGSYA) the chain is Extracellular. Residue N501 is glycosylated (N-linked (GlcNAc...) asparagine). A helical membrane pass occupies residues 506 to 526 (FVCVVMSVSMTLSALVCYATL). Topologically, residues 527-547 (WRSKRSGIVLAARKTKLVEIM) are cytoplasmic.

This sequence belongs to the major facilitator superfamily. RibJ family.

It localises to the cell membrane. Its function is as follows. Transporter involved in riboflavin (vitamin B2) uptake. Also transports FMN and FAD. The sequence is that of Riboflavin transporter RibJ from Trypanosoma brucei brucei (strain 927/4 GUTat10.1).